A 497-amino-acid polypeptide reads, in one-letter code: Ganglioside-induced differentiation-associated protein 2 (497 aa).

Residues 43 to 223 (RSPFLYNKDV…TYQKLLPLYF (181 aa)) form the Macro domain. The interval 252–273 (ERQIRISEKPGAPEDNQEEEDE) is disordered. Positions 253-263 (RQIRISEKPGA) are enriched in basic and acidic residues. Ser-280 carries the phosphoserine modification. The region spanning 333–481 (DIASLKALYQ…FPPFVLEYDA (149 aa)) is the CRAL-TRIO domain.

It belongs to the GDAP2 family.

This Homo sapiens (Human) protein is Ganglioside-induced differentiation-associated protein 2 (GDAP2).